Here is a 326-residue protein sequence, read N- to C-terminus: Putative ribose-phosphate pyrophosphokinase 2 (326 aa).

ATP-binding positions include 43–45 (DGE) and 102–103 (RQ). A Mg(2+)-binding site is contributed by His136. D-ribose 5-phosphate contacts are provided by residues Asp225 and 229 to 233 (NTGKT).

In terms of assembly, homohexamer. It depends on Mg(2+) as a cofactor.

It is found in the cytoplasm. It carries out the reaction D-ribose 5-phosphate + ATP = 5-phospho-alpha-D-ribose 1-diphosphate + AMP + H(+). The protein operates within metabolic intermediate biosynthesis; 5-phospho-alpha-D-ribose 1-diphosphate biosynthesis; 5-phospho-alpha-D-ribose 1-diphosphate from D-ribose 5-phosphate (route I): step 1/1. In terms of biological role, involved in the biosynthesis of the central metabolite phospho-alpha-D-ribosyl-1-pyrophosphate (PRPP) via the transfer of pyrophosphoryl group from ATP to 1-hydroxyl of ribose-5-phosphate (Rib-5-P). This chain is Putative ribose-phosphate pyrophosphokinase 2, found in Streptococcus pyogenes serotype M6 (strain ATCC BAA-946 / MGAS10394).